A 321-amino-acid chain; its full sequence is Probable arabinan endo-1,5-alpha-L-arabinosidase C (321 aa).

Residues 1–20 (MYLYTLILLFLASVNVNAYA) form the signal peptide. The active-site Proton acceptor is the Asp33. 2 N-linked (GlcNAc...) asparagine glycosylation sites follow: Asn75 and Asn192. The active-site Proton donor is Glu200. Asn224 carries an N-linked (GlcNAc...) asparagine glycan.

It belongs to the glycosyl hydrolase 43 family.

Its subcellular location is the secreted. It catalyses the reaction Endohydrolysis of (1-&gt;5)-alpha-arabinofuranosidic linkages in (1-&gt;5)-arabinans.. It participates in glycan metabolism; L-arabinan degradation. Endo-1,5-alpha-L-arabinanase involved in degradation of pectin. Its preferred substrate is linear 1,5-alpha-L-arabinan. The protein is Probable arabinan endo-1,5-alpha-L-arabinosidase C (abnC) of Neosartorya fischeri (strain ATCC 1020 / DSM 3700 / CBS 544.65 / FGSC A1164 / JCM 1740 / NRRL 181 / WB 181) (Aspergillus fischerianus).